A 161-amino-acid chain; its full sequence is Nucleotide-binding protein Shal_3198 (161 aa).

The protein belongs to the YajQ family.

In terms of biological role, nucleotide-binding protein. In Shewanella halifaxensis (strain HAW-EB4), this protein is Nucleotide-binding protein Shal_3198.